The primary structure comprises 769 residues: Ligand-dependent nuclear receptor-interacting factor 1 (769 aa).

Glycyl lysine isopeptide (Lys-Gly) (interchain with G-Cter in SUMO2) cross-links involve residues lysine 259 and lysine 279. Polar residues predominate over residues 378 to 387 (QIDQQNSVSP). Positions 378-400 (QIDQQNSVSPDTPVRKDTLQTVS) are disordered. Residues serine 402, serine 430, and serine 436 each carry the phosphoserine modification. Lysine 446 is covalently cross-linked (Glycyl lysine isopeptide (Lys-Gly) (interchain with G-Cter in SUMO2)). Serine 502 is subject to Phosphoserine. Residues 528 to 562 (DQEPKIHNEMASTSDKGAQGRNDKKDSQGRSNKAL) are disordered. The PxVxL motif motif lies at 580–584 (LRVCL). Serine 599 carries the post-translational modification Phosphoserine. Residue lysine 605 forms a Glycyl lysine isopeptide (Lys-Gly) (interchain with G-Cter in SUMO2) linkage. 2 short sequence motifs (nuclear localization signal) span residues 628-631 (KKRK) and 642-645 (KKRK). Lysine 702 is covalently cross-linked (Glycyl lysine isopeptide (Lys-Gly) (interchain with G-Cter in SUMO2)). A Phosphothreonine modification is found at threonine 732. Residues 740–769 (IRDEKIRRLKQVLREKEAALEEMRKKMHQK) adopt a coiled-coil conformation.

The protein belongs to the LRIF1 family. As to quaternary structure, interacts with RARA. Interacts with SMCHD1; leading to recruitment to inactivated chromosome X in females. Interacts (via PxVxL motif) with HP1 (CBX1/HP1-beta, CBX3/HP1-gamma and CBX5/HP1-alpha). As to expression, widely expressed, with the highest expression levels in heart, liver and placenta.

It localises to the chromosome. It is found in the nucleus matrix. In terms of biological role, together with SMCHD1, involved in chromosome X inactivation in females by promoting the compaction of heterochromatin. Also able to repress the ligand-induced transcriptional activity of retinoic acid receptor alpha (RARA), possibly through direct recruitment of histone deacetylases. Also required for silencing of the DUX4 locus in somatic cells. The chain is Ligand-dependent nuclear receptor-interacting factor 1 from Homo sapiens (Human).